The chain runs to 66 residues: Large ribosomal subunit protein eL24 (66 aa).

Zn(2+) is bound by residues Cys6, Cys9, Cys32, and Cys36. The C4-type zinc finger occupies 6-36 (CSFCGKSIEPASGFLYVRKDGSVLNFCSRKC).

The protein belongs to the eukaryotic ribosomal protein eL24 family. As to quaternary structure, part of the 50S ribosomal subunit. Forms a cluster with proteins L3 and L14. It depends on Zn(2+) as a cofactor.

Binds to the 23S rRNA. This is Large ribosomal subunit protein eL24 from Picrophilus torridus (strain ATCC 700027 / DSM 9790 / JCM 10055 / NBRC 100828 / KAW 2/3).